The chain runs to 370 residues: Putative agmatine deiminase (370 aa).

The Amidino-cysteine intermediate role is filled by Cys361.

The protein belongs to the agmatine deiminase family.

It catalyses the reaction agmatine + H2O = N-carbamoylputrescine + NH4(+). This is Putative agmatine deiminase from Shewanella baltica (strain OS185).